The following is an 866-amino-acid chain: DNA topoisomerase 3-beta (866 aa).

In terms of domain architecture, Toprim spans 4–149 (TVLMVAEKPS…RIFRAKFSSV (146 aa)). Mg(2+) contacts are provided by Glu10, Asp114, and Asp116. Residues 165–585 (SKDEALAVDA…HVLQQFMKKY (421 aa)) form the Topo IA-type catalytic domain. The tract at residues 207-212 (SYGPCQ) is interaction with DNA. The active-site O-(5'-phospho-DNA)-tyrosine intermediate is the Tyr329. The span at 830–853 (MRRGRGRGRGRGRGRGSSRGRRGS) shows a compositional bias: basic residues. The interval 830 to 866 (MRRGRGRGRGRGRGRGSSRGRRGSSRHDDPKMSFRDF) is disordered. Positions 854 to 866 (SRHDDPKMSFRDF) are enriched in basic and acidic residues.

This sequence belongs to the type IA topoisomerase family. It depends on Mg(2+) as a cofactor.

It carries out the reaction ATP-independent breakage of single-stranded DNA, followed by passage and rejoining.. Functionally, releases the supercoiling and torsional tension of DNA introduced during the DNA replication and transcription by transiently cleaving and rejoining one strand of the DNA duplex. Introduces a single-strand break via transesterification at a target site in duplex DNA. The scissile phosphodiester is attacked by the catalytic tyrosine of the enzyme, resulting in the formation of a DNA-(5'-phosphotyrosyl)-enzyme intermediate and the expulsion of a 3'-OH DNA strand. The free DNA strand than undergoes passage around the unbroken strand thus removing DNA supercoils. Finally, in the religation step, the DNA 3'-OH attacks the covalent intermediate to expel the active-site tyrosine and restore the DNA phosphodiester backbone. The chain is DNA topoisomerase 3-beta (TOP3B) from Oryza sativa subsp. japonica (Rice).